A 472-amino-acid chain; its full sequence is Levansucrase (472 aa).

Residues 1–29 (MNIKKIVKQATVLTFTTALLAGGATQAFA) form the signal peptide. W85, D86, and S164 together coordinate sucrose. D86 functions as the Nucleophile in the catalytic mechanism. D241 provides a ligand contact to Ca(2+). Residues R246 and D247 each coordinate sucrose. Positions 272, 308, 310, and 339 each coordinate Ca(2+). E340 contributes to the sucrose binding site. The Proton donor/acceptor role is filled by E342. Residue R360 participates in sucrose binding.

Belongs to the glycosyl hydrolase 68 family.

It localises to the secreted. It carries out the reaction [6)-beta-D-fructofuranosyl-(2-&gt;](n) alpha-D-glucopyranoside + sucrose = [6)-beta-D-fructofuranosyl-(2-&gt;](n+1) alpha-D-glucopyranoside + D-glucose. With respect to regulation, ca(2+) may play an important structural role and promote stability of levansucrase. Functionally, catalyzes the synthesis of levan, a fructose polymer, by transferring the fructosyl moiety from sucrose to a growing acceptor molecule. Also displays sucrose hydrolase activity. The polypeptide is Levansucrase (Bacillus amyloliquefaciens (Bacillus velezensis)).